Reading from the N-terminus, the 298-residue chain is Protoheme IX farnesyltransferase (298 aa).

A run of 9 helical transmembrane segments spans residues 29–49 (LIVFTAMIGMCLATPDFPPLL), 51–71 (FGVASLGIALVSFAAAALNCL), 97–117 (ETVTLATALGAAGLWLLHGFI), 120–140 (LTMWLTLATFVGYTVIYTLIL), 148–168 (IVIGGASGAMPPLLGWTAMTG), 175–195 (LVLFLIIFLWTPPHFWALACY), 221–241 (ILWYTLMLAAASLIPVSLGMS), 243–263 (GFYLIAIGLLDLVFLGYAIAL), and 278–298 (YSILYLTLLFAALFADRLIVL).

The protein belongs to the UbiA prenyltransferase family. Protoheme IX farnesyltransferase subfamily.

It is found in the cell inner membrane. It catalyses the reaction heme b + (2E,6E)-farnesyl diphosphate + H2O = Fe(II)-heme o + diphosphate. It functions in the pathway porphyrin-containing compound metabolism; heme O biosynthesis; heme O from protoheme: step 1/1. Its function is as follows. Converts heme B (protoheme IX) to heme O by substitution of the vinyl group on carbon 2 of heme B porphyrin ring with a hydroxyethyl farnesyl side group. The sequence is that of Protoheme IX farnesyltransferase from Dechloromonas aromatica (strain RCB).